A 1381-amino-acid chain; its full sequence is Non-structural polyprotein 1AB (1381 aa).

Residues 121 to 160 adopt a coiled-coil conformation; sequence VLVQEHKKLDSDLKESRRELSQLKLEHSLLRHDYERLVRE. 5 helical membrane-spanning segments follow: residues 169–189, 249–269, 279–299, 324–344, and 365–385; these read FKFSAVIFYAFFLGFLLMSAV, LALGYFPYFANWHMAAFLVGT, LYMLVTLVLATLSRFQLVALA, AFAILASVLISVLLLILCLAM, and FSHLVSFLHAPGWFTIIAILI. Residues H477, D506, and S569 each act as charge relay system; for serine protease activity in the active site. Y694 is modified (O-(5'-phospho-RNA)-tyrosine). Residues 703–732 adopt a coiled-coil conformation; that stretch reads TRDQLREMAEAAREADDDFDDYEEEKNEVD. The segment at 856 to 879 is disordered; sequence MQRKKQKPKKREEGPERGPINPDE. Residues 1122 to 1254 enclose the RdRp catalytic domain; sequence SVFIEFDWTR…TFDHVPPDYV (133 aa).

This sequence belongs to the astroviridae polyprotein 1AB family. Monomer. In terms of processing, cleaved by the viral and host proteases. The protease is probably autocatalytically cleaved.

It is found in the host membrane. It carries out the reaction RNA(n) + a ribonucleoside 5'-triphosphate = RNA(n+1) + diphosphate. In terms of biological role, responsible for the cleavage of the polyprotein into functional products. Functionally, protein covalently attached to the 5' extremity of the genomic and subgenomic RNAs. It may serve as a primer for the replicase. In Neovison vison (American mink), this protein is Non-structural polyprotein 1AB (ORF1).